We begin with the raw amino-acid sequence, 131 residues long: Small ribosomal subunit protein uS8 (131 aa).

This sequence belongs to the universal ribosomal protein uS8 family. As to quaternary structure, part of the 30S ribosomal subunit. Contacts proteins S5 and S12.

Its function is as follows. One of the primary rRNA binding proteins, it binds directly to 16S rRNA central domain where it helps coordinate assembly of the platform of the 30S subunit. The chain is Small ribosomal subunit protein uS8 from Hydrogenovibrio crunogenus (strain DSM 25203 / XCL-2) (Thiomicrospira crunogena).